The sequence spans 430 residues: Adenylosuccinate synthetase (430 aa).

Residues 13–19 and 41–43 each bind GTP; these read GDEGKGK and GHT. Aspartate 14 (proton acceptor) is an active-site residue. 2 residues coordinate Mg(2+): aspartate 14 and glycine 41. Residues 14-17, 39-42, threonine 130, arginine 144, glutamine 225, threonine 240, and arginine 304 contribute to the IMP site; these read DEGK and NAGH. Histidine 42 serves as the catalytic Proton donor. Substrate is bound at residue 300–306; it reads ASTGRPR. GTP contacts are provided by residues arginine 306, 332-334, and 414-416; these read KLD and STG.

This sequence belongs to the adenylosuccinate synthetase family. In terms of assembly, homodimer. The cofactor is Mg(2+).

The protein resides in the cytoplasm. The catalysed reaction is IMP + L-aspartate + GTP = N(6)-(1,2-dicarboxyethyl)-AMP + GDP + phosphate + 2 H(+). It participates in purine metabolism; AMP biosynthesis via de novo pathway; AMP from IMP: step 1/2. Functionally, plays an important role in the de novo pathway of purine nucleotide biosynthesis. Catalyzes the first committed step in the biosynthesis of AMP from IMP. The protein is Adenylosuccinate synthetase of Xanthomonas axonopodis pv. citri (strain 306).